Here is a 101-residue protein sequence, read N- to C-terminus: Small ribosomal subunit protein uS14 (101 aa).

Belongs to the universal ribosomal protein uS14 family. As to quaternary structure, part of the 30S ribosomal subunit. Contacts proteins S3 and S10.

Its function is as follows. Binds 16S rRNA, required for the assembly of 30S particles and may also be responsible for determining the conformation of the 16S rRNA at the A site. In Xylella fastidiosa (strain 9a5c), this protein is Small ribosomal subunit protein uS14.